The chain runs to 155 residues: Gas vesicle protein K (155 aa).

It belongs to the gas vesicle GvpK family.

Its subcellular location is the gas vesicle. Functionally, might be involved in nucleating gas vesicle formation. Gas vesicles (GV) are hollow, gas filled proteinaceous nanostructures. During planktonic growth they allow positioning of the organism at a favorable depth for light or nutrient acquisition. In terms of biological role, cluster expression in E.coli (gvpA1-gvpA2-gvpC-gvpN-gvpJ-gvpK-gvpF-gvpG-gvpV-gvpW) allows cells to float and produces irregularly shaped gas vesicles. This chain is Gas vesicle protein K, found in Nostoc sp. (strain PCC 7120 / SAG 25.82 / UTEX 2576).